A 95-amino-acid chain; its full sequence is Bacterial microcompartment shell protein EutM (95 aa).

The BMC domain occupies 6 to 90 (ALGMIETKGL…PHFEVDAILP (85 aa)).

The protein belongs to the bacterial microcompartments protein family. In terms of assembly, homohexamer; has a positively charged pore 9 Angstroms in diameter. The hexamers pack into a two-dimensional array. May interact with EutQ.

Its subcellular location is the bacterial microcompartment. Its pathway is amine and polyamine degradation; ethanolamine degradation. A component of the bacterial microcompartment (BMC) shell dedicated to ethanolamine degradation. Each homohexamer has a central pore with an opening of up to 9.0 Angstroms. Expression of the eut operon may allow this bacteria to use ethanolamine as a carbon, nitrogen and energy source. The pore probably allows metabolite passage into and out of the BMC. The protein is Bacterial microcompartment shell protein EutM of Clostridioides difficile (strain 630) (Peptoclostridium difficile).